The sequence spans 521 residues: MFS siderochrome iron transporter 1 (521 aa).

The span at 1 to 10 (MDKTASLTSQ) shows a compositional bias: polar residues. Residues 1 to 29 (MDKTASLTSQDAEKHDPDALRKERATDPP) form a disordered region. A compositionally biased stretch (basic and acidic residues) spans 11 to 29 (DAEKHDPDALRKERATDPP). 5 helical membrane passes run 62–82 (WGLFVVAGFGWFSDSVWPLMG), 99–119 (FLSLALNAGLLAGAIFWAFGC), 126–146 (WSFNLSLLIAGAFGLAAGGTQ), 148–168 (FVALACLFAVVGFGVGGNMPV), and 187–207 (ILSIWWSIGQLVASLIAWPLI). N-linked (GlcNAc...) asparagine glycosylation is present at Asn209. Transmembrane regions (helical) follow at residues 229-249 (YLLFTLGGMTLLLWAIRFFVF), 330-350 (LAWSTSLLIALWGIIGLASTL), 379-399 (VIIAVLGVPGAFLAGWAVEQP), 404-424 (KGTLAISAGLTGVFLFATTTA), 431-451 (LGWNCGYAFHSNIMYGVLYAI), and 466-486 (GLTATATRVFGLIAPVIALYA). Asn487 is a glycosylation site (N-linked (GlcNAc...) asparagine). A helical transmembrane segment spans residues 491–511 (AVPVYVSGALIIASGAMALLL).

Belongs to the major facilitator superfamily.

The protein resides in the membrane. Functionally, major facilitator transporter probably involved in siderophore basidioferrin transmembrane transport. In Ceriporiopsis subvermispora (strain B) (White-rot fungus), this protein is MFS siderochrome iron transporter 1.